We begin with the raw amino-acid sequence, 1419 residues long: DNA-directed RNA polymerase subunit beta' (1419 aa).

Cysteine 71, cysteine 73, cysteine 86, and cysteine 89 together coordinate Zn(2+). Aspartate 461, aspartate 463, and aspartate 465 together coordinate Mg(2+). Positions 815, 889, 896, and 899 each coordinate Zn(2+).

Belongs to the RNA polymerase beta' chain family. The RNAP catalytic core consists of 2 alpha, 1 beta, 1 beta' and 1 omega subunit. When a sigma factor is associated with the core the holoenzyme is formed, which can initiate transcription. Requires Mg(2+) as cofactor. It depends on Zn(2+) as a cofactor.

It carries out the reaction RNA(n) + a ribonucleoside 5'-triphosphate = RNA(n+1) + diphosphate. Functionally, DNA-dependent RNA polymerase catalyzes the transcription of DNA into RNA using the four ribonucleoside triphosphates as substrates. This chain is DNA-directed RNA polymerase subunit beta', found in Actinobacillus succinogenes (strain ATCC 55618 / DSM 22257 / CCUG 43843 / 130Z).